Consider the following 519-residue polypeptide: Sterile alpha motif domain-containing protein 1 (519 aa).

Over residues 1-11 (MAGPPALPPPE) the composition is skewed to pro residues. Disordered stretches follow at residues 1–30 (MAGP…ASPH) and 87–232 (YKGS…PVSL). The span at 12–29 (TAAAATTAAAASSSAASP) shows a compositional bias: low complexity. The SAMD1-like winged helix (WH) domain occupies 23–99 (SSSAASPHYQ…SISYRNAARV (77 aa)). T107 carries the post-translational modification Phosphothreonine. The segment covering 108–133 (PPAPPRVPRGGPAAPPPTPAPPPAPV) has biased composition (pro residues). Residues 134-147 (AAPTRAPRAAAATA) are compositionally biased toward low complexity. S150 is modified (phosphoserine). Low complexity predominate over residues 157–166 (GPRAQRAAPL). Residues 167–217 (AAPPPAPAAPPAAAPPAGPRRAPPPAVAAREPPAPPQQQQPPPPQPQPPPE) show a composition bias toward pro residues. Low complexity predominate over residues 218 to 230 (GGAARAGGPARPV). The residue at position 242 (S242) is a Phosphoserine. Basic and acidic residues predominate over residues 261 to 271 (EAARGRLERTR). 2 disordered regions span residues 261–381 (EAAR…PGSC) and 417–439 (PALP…KPTD). The segment covering 308–325 (KEEEDEDEDEEEEEEDNV) has biased composition (acidic residues). The 69-residue stretch at 443–511 (WTVMDVVEYF…KVLQQGHFED (69 aa)) folds into the SAM domain.

In terms of assembly, homopolymerize into a closed pentameric ring. Interacts (via SAM domain) with L3MBTL3 (via SAM domain); the interaction mediates L3MBTL3 binding to chromatin. Interacts (via WH domain) with KDM1A; the interaction modulates KDM1A function. As to expression, expressed to similar levels in different organs. Expressed at higher levels in bone marrow, osteoclasts and spleen. Expressed in vascular smooth muscle cells.

It is found in the nucleus. The protein localises to the chromosome. It localises to the secreted. Unmethylated CpG islands (CGIs)-binding protein which localizes to H3K4me3-decorated CGIs, where it acts as a transcriptional repressor. Tethers L3MBTL3 to chromatin and interacts with the KDM1A histone demethylase complex to modulate H3K4me2 and H3K4me3 levels at CGIs. Plays a role in atherogenesis by binding with LDL on cell surface and promoting LDL oxidation which leads to the formation of foam cell. This chain is Sterile alpha motif domain-containing protein 1, found in Mus musculus (Mouse).